The following is a 296-amino-acid chain: Sulfotransferase 1C2 (296 aa).

49–54 (KAGTTW) is a binding site for 3'-phosphoadenylyl sulfate. Substrate is bound at residue 107 to 109 (KTH). The active-site Proton acceptor is the H109. Residues R131, S139, Y194, and 228 to 233 (TSFEKM) contribute to the 3'-phosphoadenylyl sulfate site. S139 carries the phosphoserine modification. S254 is subject to Phosphoserine. 256 to 260 (FMRKG) lines the 3'-phosphoadenylyl sulfate pocket.

This sequence belongs to the sulfotransferase 1 family. As to expression, found in adult stomach, kidney and thyroid gland, and in fetal kidney and liver.

It localises to the cytoplasm. Its subcellular location is the lysosome. It is found in the mitochondrion. The catalysed reaction is a phenol + 3'-phosphoadenylyl sulfate = an aryl sulfate + adenosine 3',5'-bisphosphate + H(+). It catalyses the reaction cholesterol + 3'-phosphoadenylyl sulfate = cholesterol sulfate + adenosine 3',5'-bisphosphate + H(+). In terms of biological role, sulfotransferase that utilizes 3'-phospho-5'-adenylyl sulfate (PAPS) to catalyze the sulfate conjugation of phenolic compounds. Does not transfer sulfate to steroids, dopamine, acetaminophen, or alpha-naphthol. Except in mitochondria, where it can add sulfate to cholesterol producing cholesterol sulfate, which alters mitochondrial membrane organization, and impacts protein complex mobility increasing state-III respiration, thereby modulating mitochondrial respiration. Catalyzes the sulfation of the carcinogenic N-hydroxy-2-acetylaminofluorene leading to highly reactive intermediates capable of forming DNA adducts, potentially resulting in mutagenesis. The sequence is that of Sulfotransferase 1C2 (SULT1C2) from Homo sapiens (Human).